The primary structure comprises 352 residues: D-alanine--D-alanine ligase A (352 aa).

Residues K138–E341 enclose the ATP-grasp domain. Position 165-220 (E165–E220) interacts with ATP. Mg(2+)-binding residues include D295, E308, and N310.

The protein belongs to the D-alanine--D-alanine ligase family. It depends on Mg(2+) as a cofactor. Requires Mn(2+) as cofactor.

It localises to the cytoplasm. It carries out the reaction 2 D-alanine + ATP = D-alanyl-D-alanine + ADP + phosphate + H(+). It functions in the pathway cell wall biogenesis; peptidoglycan biosynthesis. In terms of biological role, cell wall formation. The protein is D-alanine--D-alanine ligase A of Pseudomonas putida (strain ATCC 47054 / DSM 6125 / CFBP 8728 / NCIMB 11950 / KT2440).